The sequence spans 185 residues: MISSNEFKTGLTIEVDNDVYTIIEFQHVKPGKGAAFVRTKLKNVKTGGITERKFNAGEKVPKAHVERREMQYLYKDGDHFVAMDNETYEQTSLTEAQIGDGVKYLKENMNLGILFFNGTVIGVDLPNTVILEVAHTEPGVRGDTATGGSKPATLETGAVVQVPFFVNEGEKLIIDTRTGNYVQRA.

This sequence belongs to the elongation factor P family.

It is found in the cytoplasm. The protein operates within protein biosynthesis; polypeptide chain elongation. Functionally, involved in peptide bond synthesis. Stimulates efficient translation and peptide-bond synthesis on native or reconstituted 70S ribosomes in vitro. Probably functions indirectly by altering the affinity of the ribosome for aminoacyl-tRNA, thus increasing their reactivity as acceptors for peptidyl transferase. The protein is Elongation factor P of Desulfitobacterium hafniense (strain Y51).